The sequence spans 101 residues: UPF0235 protein Cpha266_2081 (101 aa).

Belongs to the UPF0235 family.

This Chlorobium phaeobacteroides (strain DSM 266 / SMG 266 / 2430) protein is UPF0235 protein Cpha266_2081.